We begin with the raw amino-acid sequence, 358 residues long: WD repeat domain phosphoinositide-interacting protein 4 (358 aa).

WD repeat units follow at residues 2–40 and 188–228; these read AQQR…EKGH and AHQS…KLVE. A L/FRRG motif motif is present at residues 229-232; that stretch reads LRRG. One copy of the WD 3 repeat lies at 233–272; the sequence is TDPATLYCINFSHDSSFLCASSDKGTVHIFALKDTKLNRR.

It belongs to the WD repeat PROPPIN family.

It is found in the preautophagosomal structure. Functionally, component of the autophagy machinery that controls the major intracellular degradation process by which cytoplasmic materials are packaged into autophagosomes and delivered to lysosomes for degradation. Binds phosphatidylinositol 3-phosphate (PtdIns3P). This chain is WD repeat domain phosphoinositide-interacting protein 4 (wdr45), found in Danio rerio (Zebrafish).